We begin with the raw amino-acid sequence, 961 residues long: MADSCAENAAKGTENERPKEVEASADTVPQVEEGVEEYLKRKNMVLLDYEKQMFLDLVEADGLLVCAKGLSYDRVVISILKAYSDSGNLVLVINSSDWEEQYYKSKIEPKYVHEVASTATERERVYLEGGLQFISTRILVVDLLKQRIPIELISGIIVLRAHTIIESCQEAFALRLFRQKNKTGFVKAFSSSPEAFTIGYSHVERTMRNLFVKHLYIWPRFHESVRTVLQPWKIQSIEMHVPISQNITSIQSHILEIMNFLVQEIKRINRTVDMEAVTVENCVTKSFHKILQAQLDCIWHQLNSQTKLIVADLKILRSLMISTMYHDAVSAYAFMKRYRSTEYALSNSGWTLLDAAEQIFKLSRQRVFNGQQEFEPEPCPKWQTLTDLLTKEIPGDMRRSRRSEQQPKVLILCQDARTCHQLKQYLTQGGPRFLLQQALQHEVPVGKLSDNYAKESQTRSAPPKNVSSNKELRREEVSGSQPPLAGMDELAQLLSESETEGQHFEESYMLTMTQPVEVGPAAIDIKPDPDVSIFETIPELEQFDVTAALASVPHQPYICLQTFKTEREGSMALEHMLEQLQPHYVVMYNMNVTAIRQLEVFEARRRLPPADRMKVYFLIHARTVEEQAYLTSLRREKAAFEFIIDTKSKMVIPKYQDGKTDEAFLLLKTYDDEPTDENAKSRQAGGQAPQATKETPKVIVDMREFRSDLPCLIHKRGLEVLPLTITIGDYILTPDICVERKSISDLIGSLNSGRLYNQCVQMQRHYAKPILLIEFDQNKPFHLQGKFMLSQQTSMANADIVQKLQLLTLHFPKLRLIWSPSPYATAQLFEELKLGKPEPDPQTAAALGSDEPTAGEQLHFNSGIYDFLLRLPGVHTRNIHGLLRKGGSLRQLLLRSQKELEELLQSQESAKLLYDILHVAHLPEKDEVTGSTALLAASKQFGAGSHNRFRMAAAASRRGRR.

3 disordered regions span residues 1–27 (MADSCAENAAKGTENERPKEVEASADT), 451–485 (NYAKESQTRSAPPKNVSSNKELRREEVSGSQPPLA), and 674–693 (PTDENAKSRQAGGQAPQATK). The span at 13–22 (TENERPKEVE) shows a compositional bias: basic and acidic residues. Polar residues predominate over residues 458 to 469 (TRSAPPKNVSSN). Residues 697–777 (KVIVDMREFR…KPILLIEFDQ (81 aa)) form the ERCC4 domain.

It belongs to the XPF family. In terms of assembly, heterodimer. Interacts with hdm.

The protein localises to the nucleus. In terms of biological role, implicated in recombination events during meiosis, mostly in meiotic exchange. May directly resolve Holliday junctions within recombination intermediates leading to DNA exchange. Also required for the repair of mismatches within meiotic heteroduplex DNA and for nucleotide excision repair. This chain is DNA repair endonuclease XPF (mei-9), found in Drosophila melanogaster (Fruit fly).